The chain runs to 160 residues: Single-stranded DNA-binding protein 3 (160 aa).

The region spanning 2–104 is the SSB domain; it reads MNRVVLVGRL…IVAESVQFLE (103 aa). Over residues 106 to 133 the composition is skewed to polar residues; that stretch reads KQNGAGGSTSNNNQSETNYSNDNKTSSY. Positions 106-160 are disordered; sequence KQNGAGGSTSNNNQSETNYSNDNKTSSYRADRSQNGDSFANEGAPVDINPDDLPF.

Homotetramer.

In Listeria innocua serovar 6a (strain ATCC BAA-680 / CLIP 11262), this protein is Single-stranded DNA-binding protein 3 (ssb3).